Reading from the N-terminus, the 556-residue chain is Formate--tetrahydrofolate ligase (556 aa).

Position 65 to 72 (65 to 72 (TPAGEGKS)) interacts with ATP.

It belongs to the formate--tetrahydrofolate ligase family.

The catalysed reaction is (6S)-5,6,7,8-tetrahydrofolate + formate + ATP = (6R)-10-formyltetrahydrofolate + ADP + phosphate. It participates in one-carbon metabolism; tetrahydrofolate interconversion. This Streptococcus agalactiae serotype V (strain ATCC BAA-611 / 2603 V/R) protein is Formate--tetrahydrofolate ligase.